We begin with the raw amino-acid sequence, 105 residues long: Nucleoid-associated protein EAT1b_1710 (105 aa).

Residues Met1–Lys16 are compositionally biased toward low complexity. Residues Met1 to Glu26 are disordered. Over residues Met17–Glu26 the composition is skewed to basic and acidic residues.

This sequence belongs to the YbaB/EbfC family. Homodimer.

The protein localises to the cytoplasm. It is found in the nucleoid. Binds to DNA and alters its conformation. May be involved in regulation of gene expression, nucleoid organization and DNA protection. This Exiguobacterium sp. (strain ATCC BAA-1283 / AT1b) protein is Nucleoid-associated protein EAT1b_1710.